Reading from the N-terminus, the 79-residue chain is CDC42 small effector protein 1-A (79 aa).

S-palmitoyl cysteine attachment occurs at residues cysteine 10 and cysteine 11. Residues 30 to 43 (IGEPMNFVHLTHVG) enclose the CRIB domain.

It belongs to the CDC42SE/SPEC family.

Its subcellular location is the cytoplasm. It localises to the cytoskeleton. The protein localises to the cell membrane. In terms of biological role, probably involved in the organization of the actin cytoskeleton by acting downstream of CDC42, inducing actin filament assembly. In Xenopus laevis (African clawed frog), this protein is CDC42 small effector protein 1-A (cdc42se1-a).